A 507-amino-acid polypeptide reads, in one-letter code: Pyridoxine 4-oxidase (507 aa).

His448 functions as the Proton acceptor in the catalytic mechanism.

The protein belongs to the GMC oxidoreductase family. In terms of assembly, monomer. Requires FAD as cofactor.

The catalysed reaction is pyridoxine + O2 = pyridoxal + H2O2. The protein operates within cofactor degradation; B6 vitamer degradation; pyridoxal from pyridoxine (oxidase route): step 1/1. The sequence is that of Pyridoxine 4-oxidase (pno) from Microbacterium luteolum (Aureobacterium luteolum).